Consider the following 970-residue polypeptide: Type III restriction-modification enzyme EcoP15I Res subunit (970 aa).

Residues 75–540 (AKSNIIDVSM…EVGRGLRLPV (466 aa)) are helicase-like domain. AMP contacts are provided by T91, G122, F126, and D226. Residues 894-918 (TYSPDFAYVVKTAEGDYLNFIIETK) are endonuclease domain.

The protein belongs to the type III restriction-modification system Res protein family. In terms of assembly, a heterotetramer with stoichiometry Res(2)Mod(2). A heterotrimer with stoichiometry Res(1)Mod(2). Mg(2+) serves as cofactor. The cofactor is S-adenosyl-L-methionine.

It catalyses the reaction Endonucleolytic cleavage of DNA to give specific double-stranded fragments with terminal 5'-phosphates.. A type III restriction enzyme that recognizes 2 inversely oriented double-stranded sequences 5'-CAGCAG-3' and cleaves DNA 25-27 base pairs downstream of one site. DNA restriction requires both the Res and Mod subunits. DNA topology affects its action; relaxed and negatively supercoiled DNA are digested but positively supercoiled DNA is not a good substrate. Interacts with DNA approximately one half-turn downstream of the recognition site. After binding to one recognition site undergoes random one-dimensional diffusion along DNA until it collides with a stationary enzyme bound to the second DNA site, which is when DNA cleavage occurs. In Escherichia coli, this protein is Type III restriction-modification enzyme EcoP15I Res subunit.